The primary structure comprises 793 residues: Flavin carrier protein 1 (793 aa).

A signal peptide spans 1–21 (MQVLVTLWCLICTCLVLPVAA). Residues 22–163 (KKRTLTASSL…FFSNGKTVSQ (142 aa)) are Lumenal-facing. N-linked (GlcNAc...) asparagine glycosylation is present at N143. A helical transmembrane segment spans residues 164–184 (IGVKWVTAVIAGIGLLTSAVL). Over 185 to 194 (STFGNSTAAS) the chain is Cytoplasmic. The helical transmembrane segment at 195-215 (HISANTMSLFLYFQSVAVVAM) threads the bilayer. At 216 to 223 (QHVDSVPP) the chain is on the lumenal side. Residues 224-244 (IAAAWSENLAWSMGLIRITFM) traverse the membrane as a helical segment. Residues 245-249 (QKIFR) lie on the Cytoplasmic side of the membrane. The helical transmembrane segment at 250-272 (WYVEATGGSASLYLTATTMSVLT) threads the bilayer. The Lumenal segment spans residues 273–317 (QRGLDYLKNTSVYKRAENVLYGNSNTLIFRGIKRMGYRMKIENTA). Residue N281 is glycosylated (N-linked (GlcNAc...) asparagine). A helical transmembrane segment spans residues 318–338 (IVCTGFTFFVLCGYFLAGFIM). Over 339-372 (ACKYSIELCIRCGWMRSDRFYQFRKNWRSVLKGS) the chain is Cytoplasmic. The helical transmembrane segment at 373-393 (LLRYIYIGFTQLTILSFWEFT) threads the bilayer. Residues 394–397 (ERDS) are Lumenal-facing. A helical membrane pass occupies residues 398–418 (AGVIVIACLFIVLSCGLMAWA). Over 419-461 (AYRTIFFASKSVEMYNNPAALLYGDEYVLNKYGFFYTMFNAKH) the chain is Cytoplasmic. A helical membrane pass occupies residues 462–482 (YWWNALLTTYILVKALFVGFA). At 483 to 484 (QA) the chain is on the lumenal side. A helical membrane pass occupies residues 485 to 505 (SGKTQALAIFIIDLAYFVAII). Topologically, residues 506–516 (RYKPYLDRPTN) are cytoplasmic. A helical transmembrane segment spans residues 517–537 (IVNIFICTVTLVNSFLFMFFS). At 538–551 (NLFNQKYAVSAIMG) the chain is on the lumenal side. Residues 552 to 572 (WVFFIMNAAFSLLLLLMILAF) traverse the membrane as a helical segment. The Cytoplasmic portion of the chain corresponds to 573 to 793 (TTIILFSKNP…KANILDPDYL (221 aa)). Position 610 is a phosphoserine (S610). T626 is modified (phosphothreonine). 2 disordered regions span residues 649-674 (YDDEKTGTNSENAESSSKETTRPTFS) and 689-731 (KLGS…QESE). The span at 701-719 (ITQQEVSPDRASSSPNSKS) shows a compositional bias: polar residues. A phosphoserine mark is found at S771 and S774.

This sequence belongs to the transient receptor potential (TRP) ion channel family.

The protein localises to the endoplasmic reticulum membrane. May be responsible for the transport of FAD into the endoplasmic reticulum lumen, where it is required for oxidative protein folding. In Saccharomyces cerevisiae (strain ATCC 204508 / S288c) (Baker's yeast), this protein is Flavin carrier protein 1 (FLC1).